A 621-amino-acid chain; its full sequence is DnaJ homolog subfamily C member 2 (621 aa).

Met1 is modified (N-acetylmethionine). Phosphoserine is present on residues Ser47, Ser49, Ser60, and Ser63. The J domain occupies 88–161 (DHYAVLGLGH…VKRRAFNSVD (74 aa)). The segment at 160 to 250 (VDPTFDNSVP…RDERRWIEKQ (91 aa)) is ZRF1-UBD. Ser183 is modified (phosphoserine). Disordered stretches follow at residues 294-315 (EKKA…QRQA) and 426-453 (KEEA…GSKH). SANT domains follow at residues 449–511 (NGSK…KLDP) and 549–604 (TDFT…EMVK).

As to quaternary structure, component of ribosome-associated complex (RAC), a heterodimer composed of Hsp70/DnaK-type chaperone HSPA14 and Hsp40/DnaJ-type chaperone DNAJC2. Interacts (via ZRF1-UBD region) with ID1. Phosphorylated in M (mitotic) phase.

It is found in the nucleus. The protein resides in the cytoplasm. It localises to the cytosol. Functionally, acts both as a chaperone in the cytosol and as a chromatin regulator in the nucleus. When cytosolic, acts as a molecular chaperone: component of the ribosome-associated complex (RAC), a complex involved in folding or maintaining nascent polypeptides in a folding-competent state. In the RAC complex, stimulates the ATPase activity of the ribosome-associated pool of Hsp70-type chaperones HSPA14 that bind to the nascent polypeptide chain. When nuclear, mediates the switching from polycomb-repressed genes to an active state: specifically recruited at histone H2A ubiquitinated at 'Lys-119' (H2AK119ub), and promotes the displacement of the polycomb PRC1 complex from chromatin, thereby facilitating transcription activation. In Bos taurus (Bovine), this protein is DnaJ homolog subfamily C member 2 (DNAJC2).